A 128-amino-acid polypeptide reads, in one-letter code: MQKIVRNRLIKIILCFCSTCLGISIILYNLEKNIIFFFPPSKINEAEQGKELRVGGLVKRDSINRISANKISFVITDNIKDLEILYQGVLPALFREGQGIIAIGQLSDNKFIARQLLAKHDENYRPPS.

The Cytoplasmic segment spans residues 1 to 8 (MQKIVRNR). A helical; Signal-anchor for type II membrane protein membrane pass occupies residues 9–29 (LIKIILCFCSTCLGISIILYN). At 30–128 (LEKNIIFFFP…KHDENYRPPS (99 aa)) the chain is on the periplasmic side. Heme-binding residues include His120 and Tyr124.

It belongs to the CcmE/CycJ family.

It localises to the cell inner membrane. In terms of biological role, heme chaperone required for the biogenesis of c-type cytochromes. Transiently binds heme delivered by CcmC and transfers the heme to apo-cytochromes in a process facilitated by CcmF and CcmH. The sequence is that of Cytochrome c-type biogenesis protein CcmE from Rickettsia typhi (strain ATCC VR-144 / Wilmington).